A 354-amino-acid chain; its full sequence is Ferrochelatase (354 aa).

Fe cation is bound by residues His214 and Glu295.

This sequence belongs to the ferrochelatase family.

The protein resides in the cytoplasm. The catalysed reaction is heme b + 2 H(+) = protoporphyrin IX + Fe(2+). It functions in the pathway porphyrin-containing compound metabolism; protoheme biosynthesis; protoheme from protoporphyrin-IX: step 1/1. In terms of biological role, catalyzes the ferrous insertion into protoporphyrin IX. This is Ferrochelatase from Burkholderia orbicola (strain MC0-3).